The chain runs to 289 residues: Undecaprenyl-diphosphatase (289 aa).

Helical transmembrane passes span 23-43, 56-76, 104-124, 135-155, 165-185, 210-230, 235-255, and 269-289; these read LFLG…TAHL, GVAV…AYFW, SAIV…KLFW, IPAI…AENV, LSFW…IPGV, FLLG…QAFG, VDVF…WIAI, and IFIT…YLAF.

Belongs to the UppP family.

Its subcellular location is the cell inner membrane. The catalysed reaction is di-trans,octa-cis-undecaprenyl diphosphate + H2O = di-trans,octa-cis-undecaprenyl phosphate + phosphate + H(+). Catalyzes the dephosphorylation of undecaprenyl diphosphate (UPP). Confers resistance to bacitracin. The polypeptide is Undecaprenyl-diphosphatase (Prochlorococcus marinus (strain SARG / CCMP1375 / SS120)).